The primary structure comprises 270 residues: Hemin import ATP-binding protein HmuV (270 aa).

The 238-residue stretch at L5–E242 folds into the ABC transporter domain. G37–S44 serves as a coordination point for ATP.

It belongs to the ABC transporter superfamily. Heme (hemin) importer (TC 3.A.1.14.5) family. In terms of assembly, the complex is composed of two ATP-binding proteins (HmuV), two transmembrane proteins (HmuU) and a solute-binding protein (HmuT).

The protein localises to the cell inner membrane. Functionally, part of the ABC transporter complex HmuTUV involved in hemin import. Responsible for energy coupling to the transport system. The protein is Hemin import ATP-binding protein HmuV of Rhodopseudomonas palustris (strain BisA53).